A 313-amino-acid chain; its full sequence is Phosphate import ATP-binding protein PstB 2 (313 aa).

A compositionally biased stretch (polar residues) spans 1-33 (MSDSINTEPSTDTQTNGERTVETTSPSAETTAG). Residues 1 to 40 (MSDSINTEPSTDTQTNGERTVETTSPSAETTAGESEEQVR) are disordered. Positions 54–308 (LSVENLDVWY…PESQRVEDYI (255 aa)) constitute an ABC transporter domain. 86 to 93 (GPSGCGKS) contributes to the ATP binding site.

Belongs to the ABC transporter superfamily. Phosphate importer (TC 3.A.1.7) family. The complex is composed of two ATP-binding proteins (PstB), two transmembrane proteins (PstC and PstA) and a solute-binding protein (PstS).

The protein resides in the cell membrane. The catalysed reaction is phosphate(out) + ATP + H2O = ADP + 2 phosphate(in) + H(+). Its function is as follows. Part of the ABC transporter complex PstSACB involved in phosphate import. Responsible for energy coupling to the transport system. The chain is Phosphate import ATP-binding protein PstB 2 from Haloarcula marismortui (strain ATCC 43049 / DSM 3752 / JCM 8966 / VKM B-1809) (Halobacterium marismortui).